Consider the following 106-residue polypeptide: Pyrimidine/purine nucleoside phosphorylase (106 aa).

It belongs to the nucleoside phosphorylase PpnP family.

The enzyme catalyses a purine D-ribonucleoside + phosphate = a purine nucleobase + alpha-D-ribose 1-phosphate. It catalyses the reaction adenosine + phosphate = alpha-D-ribose 1-phosphate + adenine. It carries out the reaction cytidine + phosphate = cytosine + alpha-D-ribose 1-phosphate. The catalysed reaction is guanosine + phosphate = alpha-D-ribose 1-phosphate + guanine. The enzyme catalyses inosine + phosphate = alpha-D-ribose 1-phosphate + hypoxanthine. It catalyses the reaction thymidine + phosphate = 2-deoxy-alpha-D-ribose 1-phosphate + thymine. It carries out the reaction uridine + phosphate = alpha-D-ribose 1-phosphate + uracil. The catalysed reaction is xanthosine + phosphate = alpha-D-ribose 1-phosphate + xanthine. In terms of biological role, catalyzes the phosphorolysis of diverse nucleosides, yielding D-ribose 1-phosphate and the respective free bases. Can use uridine, adenosine, guanosine, cytidine, thymidine, inosine and xanthosine as substrates. Also catalyzes the reverse reactions. The protein is Pyrimidine/purine nucleoside phosphorylase of Burkholderia ambifaria (strain MC40-6).